Reading from the N-terminus, the 190-residue chain is Putative resolvase R80 (190 aa).

The segment at residues 11–30 (SSVLGVHQRTLYQWDKKGWI) is a DNA-binding region (H-T-H motif). The 130-residue stretch at 61–190 (LSICYVRVSS…RNGSRKYSNK (130 aa)) folds into the Resolvase/invertase-type recombinase catalytic domain. A coiled-coil region spans residues 67-92 (RVSSNSQKDDLERQIKFMKKKYPNHT). Catalysis depends on Ser-69, which acts as the O-(5'-phospho-DNA)-serine intermediate.

Belongs to the site-specific recombinase resolvase family.

In terms of biological role, resolvase catalyzes the resolution (a site-specific recombination) of the cointegrated replicon to yield the final transposition products. The protein is Putative resolvase R80 of Acanthamoeba polyphaga mimivirus (APMV).